The sequence spans 243 residues: Venom nerve growth factor 1 (243 aa).

A signal peptide spans 1–18; the sequence is MSMLCYTLIIAFLIGIWA. The propeptide occupies 19–125; sequence VPKSEDNAPL…ALNRNIRAKR (107 aa). 3 disulfides stabilise this stretch: Cys-139–Cys-204, Cys-182–Cys-232, and Cys-192–Cys-234. Asn-148 carries N-linked (GlcNAc...) asparagine glycosylation.

This sequence belongs to the NGF-beta family. In terms of assembly, homodimer; non-covalently linked. Expressed by the venom gland.

It is found in the secreted. In terms of biological role, nerve growth factor is important for the development and maintenance of the sympathetic and sensory nervous systems. It stimulates division and differentiation of sympathetic and embryonic sensory neurons as well as basal forebrain cholinergic neurons in the brain. Its relevance in the snake venom is not clear. However, it has been shown to inhibit metalloproteinase-dependent proteolysis of platelet glycoprotein Ib alpha, suggesting a metalloproteinase inhibition to prevent metalloprotease autodigestion and/or protection against prey proteases. Binds a lipid between the two protein chains in the homodimer. The lipid-bound form promotes histamine relase from mouse mast cells, contrary to the lipid-free form. This Naja sputatrix (Malayan spitting cobra) protein is Venom nerve growth factor 1.